The following is a 405-amino-acid chain: Potassium channel subfamily K member 13 (405 aa).

Residues 1-19 are Cytoplasmic-facing; the sequence is MAGRGCGCSPGHLNEDNAR. A helical membrane pass occupies residues 20 to 40; it reads FLLLAGLILLYLLGGAAVFSA. Residues Asn-59 and Asn-65 are each glycosylated (N-linked (GlcNAc...) asparagine). Positions 95–115 form an intramembrane region, pore-forming; the sequence is WDFTGAFYFVGTVVSTIGFGM. Positions 110, 111, and 112 each coordinate K(+). Residues 110-115 form a selectivity filter 1 region; it reads TIGFGM. The helical transmembrane segment at 125 to 145 threads the bilayer; it reads IFLIFYGLIGCASTILFFNLF. The Cytoplasmic portion of the chain corresponds to 146 to 193; that stretch reads LERLITVIACVMRSCHQQQLRRRGAVTQDNMKAPEKGEADSLTGWKPS. A helical transmembrane segment spans residues 194–214; that stretch reads VYYVMLILCLASVAISCGASA. Positions 224–244 form an intramembrane region, pore-forming; it reads YFDSVYFCFVAFSTIGFGDLV. The K(+) site is built by Thr-237, Ile-238, Gly-239, and Phe-240. The interval 237–242 is selectivity filter 2; the sequence is TIGFGD. A helical transmembrane segment spans residues 263–283; sequence FLILMGVCCIYSLFNVISILI. Topologically, residues 284-405 are cytoplasmic; sequence KQTVNWILRK…NRLAETSGDR (122 aa).

This sequence belongs to the two pore domain potassium channel (TC 1.A.1.8) family. As to quaternary structure, homodimer. Heterodimer with KCNK12.

The protein resides in the cell membrane. The catalysed reaction is K(+)(in) = K(+)(out). Its function is as follows. K(+) channel that conducts outward rectifying tonic currents potentiated by purinergic signals. Homo- and heterodimerizes to form functional channels with distinct regulatory and gating properties. Contributes most of K(+) currents at the plasma membrane of resting microglia. Maintains a depolarized membrane potential required for proper ramified microglia morphology and phagocytosis, selectively mediating microglial pruning of presynaptic compartments at hippocampal excitatory synapses. Upon local release of ATP caused by neuronal injury or infection, it is potentiated by P2RY12 and P2RX7 receptor signaling and contributes to ATP-triggered K(+) efflux underlying microglial NLRP3 inflammasome assembly and IL1B release. The chain is Potassium channel subfamily K member 13 from Mus musculus (Mouse).